A 256-amino-acid polypeptide reads, in one-letter code: Capsid protein (256 aa).

Positions 3–20 (KRPADIIISTPGSKVRRR) match the Bipartite nuclear localization signal motif. Positions 40-54 (KRQSWTNRPINRKPR) match the Nuclear localization signal motif. A zinc finger lies at 68-85 (CEGPCKVQSFESRHDVVH). The Nuclear export signal signature appears at 101–122 (LTHRVGKRFCVKSIYILGKIWM). The Bipartite nuclear localization signal signature appears at 200 to 247 (RRFFRVNNYVVYNQQEAGKYENHTENALMLYMACTHASNPVYATLKIR).

This sequence belongs to the geminiviridae capsid protein family. In terms of assembly, homomultimer. Binds to single-stranded and double-stranded viral DNA. Interacts (via nuclear localization signals) with host importin alpha-1a.

It localises to the virion. The protein resides in the host nucleus. In terms of biological role, encapsidates the viral DNA into characteristic twinned ('geminate') particles. Binds the genomic viral ssDNA and shuttles it into and out of the cell nucleus. The CP of bipartite geminiviruses is not required for cell-to-cell or systemic movement. The polypeptide is Capsid protein (Manihot esculenta (Cassava)).